The chain runs to 544 residues: Probable protein kinase UbiB (544 aa).

The Protein kinase domain occupies 123 to 505; it reads EFDEQALASA…GRQKSHNVRS (383 aa). ATP is bound by residues 129–137 and lysine 156; that span reads LASASIAQV. Residue aspartate 291 is the Proton acceptor of the active site. The chain crosses the membrane as a helical span at residues 522-540; that stretch reads LPLWLSCGTLVTVLLVLLL.

The protein belongs to the ABC1 family. UbiB subfamily.

The protein resides in the cell inner membrane. The protein operates within cofactor biosynthesis; ubiquinone biosynthesis [regulation]. In terms of biological role, is probably a protein kinase regulator of UbiI activity which is involved in aerobic coenzyme Q (ubiquinone) biosynthesis. In Actinobacillus pleuropneumoniae serotype 5b (strain L20), this protein is Probable protein kinase UbiB.